The primary structure comprises 285 residues: tRNA (guanine-N(7)-)-methyltransferase (285 aa).

S-adenosyl-L-methionine is bound by residues Gly102, Glu125–Ile126, Asn160–Ala161, and Cys180. Asp183 is an active-site residue. Thr258–Glu260 serves as a coordination point for S-adenosyl-L-methionine.

The protein belongs to the class I-like SAM-binding methyltransferase superfamily. TrmB family. In terms of assembly, forms a complex with TRM82.

The protein resides in the nucleus. It carries out the reaction guanosine(46) in tRNA + S-adenosyl-L-methionine = N(7)-methylguanosine(46) in tRNA + S-adenosyl-L-homocysteine. It functions in the pathway tRNA modification; N(7)-methylguanine-tRNA biosynthesis. Functionally, catalyzes the formation of N(7)-methylguanine at position 46 (m7G46) in tRNA. The protein is tRNA (guanine-N(7)-)-methyltransferase of Candida glabrata (strain ATCC 2001 / BCRC 20586 / JCM 3761 / NBRC 0622 / NRRL Y-65 / CBS 138) (Yeast).